A 177-amino-acid polypeptide reads, in one-letter code: FMRFamide-related peptides (177 aa).

A signal peptide spans 1–21 (MNHPRSIAMLAALWLVVSVTS). Residues 22–32 (TPVRRSPDLEA) constitute a propeptide that is removed on maturation. At F45 the chain carries Phenylalanine amide. The propeptide occupies 47 to 93 (RSTLPVVPPAQPSFLQRYSAPQPAALTADDLMTFLRAYEEDYSSPVS). A phenylalanine amide mark is found at F102 and F111. A propeptide spanning residues 113-131 (RSVDEENSGYQAETNTYPQ) is cleaved from the precursor. L143 carries the leucine amide modification. Residues 145-177 (RDNELSESNDEDRYEVESERTKRSVVDPCNDCA) constitute a propeptide that is removed on maturation. The segment at 145 to 177 (RDNELSESNDEDRYEVESERTKRSVVDPCNDCA) is disordered. Over residues 149 to 158 (LSESNDEDRY) the composition is skewed to acidic residues. Residues 159 to 169 (EVESERTKRSV) show a composition bias toward basic and acidic residues.

It belongs to the FARP (FMRFamide related peptide) family. As to expression, only expressed in the CNS and predominantly in the thoracic ganglia. Strongest expression is seen in two pairs of large neurons in each thoracic ganglion. These neurons are ventrolateral neurosecretory cells 1 and 2, they project their axons through transverse nerves into the periphery where axons from the prothoracic ganglion innervate the prothoracic gland.

The protein localises to the secreted. Functionally, regulates ecdysteroidogenesis by direct innervation of the prothoracic gland by reducing cAMP production via the receptor for myosuppressin. The neurons that innervate the prothoracic gland during the fifth instar are most active during days 0-4, after which they reduce and then peak again on day 6. Expression suppresses the biosynthesis of steroid hormones called ecdysteroids that elicit molting and metamorphosis. This chain is FMRFamide-related peptides, found in Bombyx mori (Silk moth).